A 269-amino-acid polypeptide reads, in one-letter code: Lysyl endopeptidase (269 aa).

Disulfide bonds link Cys6–Cys216, Cys12–Cys80, and Cys36–Cys58. Active-site charge relay system residues include His57, Asp113, and Ser194.

The protein belongs to the peptidase S1 family.

It is found in the secreted. It carries out the reaction Preferential cleavage: Lys-|-Xaa, including Lys-|-Pro.. Its function is as follows. Highly specific endopeptidase that hydrolyzes lysyl bonds including the Lys-Pro bond. The polypeptide is Lysyl endopeptidase (Lysobacter enzymogenes).